Consider the following 86-residue polypeptide: Toxin Cn1 (86 aa).

A signal peptide spans 1-19 (MNSLLMITACFVLIGTVWA). Residues 20–84 (KDGYLVDAKG…TWPLPNKTCS (65 aa)) form the LCN-type CS-alpha/beta domain. 4 cysteine pairs are disulfide-bonded: Cys-30–Cys-83, Cys-34–Cys-59, Cys-43–Cys-64, and Cys-47–Cys-66. A Serine amide modification is found at Ser-84.

This sequence belongs to the long (4 C-C) scorpion toxin superfamily. Sodium channel inhibitor family. Beta subfamily. Expressed by the venom gland.

It is found in the secreted. In terms of biological role, beta toxins bind voltage-independently at site-4 of sodium channels (Nav) and shift the voltage of activation toward more negative potentials thereby affecting sodium channel activation and promoting spontaneous and repetitive firing. The chain is Toxin Cn1 from Centruroides noxius (Mexican scorpion).